The primary structure comprises 98 residues: Small ribosomal subunit protein uS17B (98 aa).

This sequence belongs to the universal ribosomal protein uS17 family. In terms of assembly, part of the 30S ribosomal subunit.

One of the primary rRNA binding proteins, it binds specifically to the 5'-end of 16S ribosomal RNA. The polypeptide is Small ribosomal subunit protein uS17B (Bacteroides thetaiotaomicron (strain ATCC 29148 / DSM 2079 / JCM 5827 / CCUG 10774 / NCTC 10582 / VPI-5482 / E50)).